A 222-amino-acid chain; its full sequence is Probable translocation protein y4yL (222 aa).

4 consecutive transmembrane segments (helical) span residues 6–26 (PAILALLAITAALGLLVLAVV), 52–72 (PNIVLYAAALILTMFVSAPVA), 158–178 (IGFLLYLPFIVIDLIVTTILM), and 182–202 (MSMVSPTIIAVPFKLFLFVAI).

The protein belongs to the FliP/MopC/SpaP family.

It localises to the cell membrane. Could be involved in the secretion of an unknown factor. In Sinorhizobium fredii (strain NBRC 101917 / NGR234), this protein is Probable translocation protein y4yL.